The chain runs to 1222 residues: Deubiquitinating protein VCPIP1 (1222 aa).

The segment covering 1 to 21 has biased composition (pro residues); sequence MSQPPPPPPPLPPPPPPPEAP. Positions 1–36 are disordered; sequence MSQPPPPPPPLPPPPPPPEAPQTPSSLASAAASGGL. A compositionally biased stretch (low complexity) spans 25 to 36; that stretch reads SSLASAAASGGL. The OTU domain maps to 208–361; sequence LIPVHVDGDG…RNHYIPLVGI (154 aa). Residue D216 is part of the active site. Residue C219 is the Nucleophile of the active site. H354 is a catalytic residue. K408 carries the N6-acetyllysine modification. Disordered regions lie at residues 725–776, 989–1009, and 1024–1074; these read SVMQ…KEKK, EATT…LGSG, and AFQG…VFTA. Phosphoserine occurs at positions 747 and 757. The span at 755–771 shows a compositional bias: low complexity; it reads PSSAPATPTKAPYSPTT. T763 carries the post-translational modification Phosphothreonine. Phosphoserine occurs at positions 768, 994, and 998. A compositionally biased stretch (basic and acidic residues) spans 1041–1050; that stretch reads LDPRARETSV. Positions 1057–1074 are enriched in polar residues; sequence GTDFSNSSTKTEPSVFTA. At S1077 the chain carries Phosphoserine. 2 disordered regions span residues 1113–1175 and 1188–1222; these read VSSI…TETT and ATRS…MDHS. The span at 1143–1157 shows a compositional bias: polar residues; that stretch reads VVSSSAKSGSLQTGL. Positions 1163 to 1175 are enriched in low complexity; it reads LTGGTENLNTETT. A Phosphoserine modification is found at S1198. Residues 1200–1209 are compositionally biased toward acidic residues; the sequence is EELEEMDSQD. The residue at position 1207 (S1207) is a Phosphoserine; by ATM. Positions 1210–1222 are enriched in polar residues; sequence AEMTNTTEPMDHS.

Binds VCP and the ternary complex containing STX5A, NSFL1C and VCP. Phosphorylated at Ser-1207 by ATM or ATR following induction of covalent DNA-protein cross-links (DPCs).

The protein localises to the nucleus. Its subcellular location is the cytoplasm. It is found in the endoplasmic reticulum. It localises to the golgi apparatus. The protein resides in the golgi stack. It carries out the reaction Thiol-dependent hydrolysis of ester, thioester, amide, peptide and isopeptide bonds formed by the C-terminal Gly of ubiquitin (a 76-residue protein attached to proteins as an intracellular targeting signal).. Its function is as follows. Deubiquitinating enzyme involved in DNA repair and reassembly of the Golgi apparatus and the endoplasmic reticulum following mitosis. Necessary for VCP-mediated reassembly of Golgi stacks after mitosis. Plays a role in VCP-mediated formation of transitional endoplasmic reticulum (tER). Mediates dissociation of the ternary complex containing STX5A, NSFL1C and VCP. Also involved in DNA repair following phosphorylation by ATM or ATR: acts by catalyzing deubiquitination of SPRTN, thereby promoting SPRTN recruitment to chromatin and subsequent proteolytic cleavage of covalent DNA-protein cross-links (DPCs). Hydrolyzes 'Lys-11'- and 'Lys-48'-linked polyubiquitin chains. Functionally, (Microbial infection) Regulates the duration of C.botulinum neurotoxin type A (BoNT/A) intoxication by catalyzing deubiquitination of Botulinum neurotoxin A light chain (LC), thereby preventing LC degradation by the proteasome, and accelerating botulinum neurotoxin intoxication in patients. The sequence is that of Deubiquitinating protein VCPIP1 from Homo sapiens (Human).